The sequence spans 347 residues: 5-formaminoimidazole-4-carboxamide-1-(beta)-D-ribofuranosyl 5'-monophosphate synthetase (347 aa).

2 residues coordinate 5-amino-1-(5-phospho-beta-D-ribosyl)imidazole-4-carboxamide: His23 and Ser91. The ATP-grasp domain occupies 112-323 (RKILLWESDQ…YSYLYWDEPM (212 aa)). ATP contacts are provided by residues 142-196 (PDEV…VPAY) and Glu218. Residue Asn244 coordinates 5-amino-1-(5-phospho-beta-D-ribosyl)imidazole-4-carboxamide. Positions 283 and 296 each coordinate Mg(2+).

Belongs to the phosphohexose mutase family. It depends on Mg(2+) as a cofactor. Mn(2+) is required as a cofactor.

The catalysed reaction is 5-amino-1-(5-phospho-beta-D-ribosyl)imidazole-4-carboxamide + formate + ATP = 5-formamido-1-(5-phospho-D-ribosyl)imidazole-4-carboxamide + ADP + phosphate. It participates in purine metabolism; IMP biosynthesis via de novo pathway; 5-formamido-1-(5-phospho-D-ribosyl)imidazole-4-carboxamide from 5-amino-1-(5-phospho-D-ribosyl)imidazole-4-carboxamide (formate route): step 1/1. Its function is as follows. Catalyzes the ATP- and formate-dependent formylation of 5-aminoimidazole-4-carboxamide-1-beta-d-ribofuranosyl 5'-monophosphate (AICAR) to 5-formaminoimidazole-4-carboxamide-1-beta-d-ribofuranosyl 5'-monophosphate (FAICAR) in the absence of folates. The sequence is that of 5-formaminoimidazole-4-carboxamide-1-(beta)-D-ribofuranosyl 5'-monophosphate synthetase from Ignicoccus hospitalis (strain KIN4/I / DSM 18386 / JCM 14125).